We begin with the raw amino-acid sequence, 267 residues long: tRNA (guanine-N(1)-)-methyltransferase (267 aa).

Residues Gly119 and 139–144 (IGDYVL) each bind S-adenosyl-L-methionine.

The protein belongs to the RNA methyltransferase TrmD family. In terms of assembly, homodimer.

It is found in the cytoplasm. It catalyses the reaction guanosine(37) in tRNA + S-adenosyl-L-methionine = N(1)-methylguanosine(37) in tRNA + S-adenosyl-L-homocysteine + H(+). Its function is as follows. Specifically methylates guanosine-37 in various tRNAs. This is tRNA (guanine-N(1)-)-methyltransferase from Chromohalobacter salexigens (strain ATCC BAA-138 / DSM 3043 / CIP 106854 / NCIMB 13768 / 1H11).